A 297-amino-acid polypeptide reads, in one-letter code: Nitrogenase iron protein (297 aa).

11–18 (GKGGIGKS) provides a ligand contact to ATP. Residue Cys99 coordinates [4Fe-4S] cluster. Arg102 carries the post-translational modification ADP-ribosylarginine; by dinitrogenase reductase ADP-ribosyltransferase. Residue Cys133 participates in [4Fe-4S] cluster binding.

This sequence belongs to the NifH/BchL/ChlL family. Homodimer. [4Fe-4S] cluster serves as cofactor. The reversible ADP-ribosylation of Arg-102 inactivates the nitrogenase reductase and regulates nitrogenase activity.

It catalyses the reaction N2 + 8 reduced [2Fe-2S]-[ferredoxin] + 16 ATP + 16 H2O = H2 + 8 oxidized [2Fe-2S]-[ferredoxin] + 2 NH4(+) + 16 ADP + 16 phosphate + 6 H(+). The key enzymatic reactions in nitrogen fixation are catalyzed by the nitrogenase complex, which has 2 components: the iron protein and the molybdenum-iron protein. The chain is Nitrogenase iron protein from Mesorhizobium japonicum (strain LMG 29417 / CECT 9101 / MAFF 303099) (Mesorhizobium loti (strain MAFF 303099)).